A 396-amino-acid chain; its full sequence is DNA polymerase IV (396 aa).

The 181-residue stretch at 6–186 folds into the UmuC domain; that stretch reads IIHVDMDAFY…LPISRLWGVG (181 aa). Positions 10 and 104 each coordinate Mg(2+). Glutamate 105 is an active-site residue.

Belongs to the DNA polymerase type-Y family. In terms of assembly, monomer. Requires Mg(2+) as cofactor.

The protein resides in the cytoplasm. The catalysed reaction is DNA(n) + a 2'-deoxyribonucleoside 5'-triphosphate = DNA(n+1) + diphosphate. Functionally, poorly processive, error-prone DNA polymerase involved in untargeted mutagenesis. Copies undamaged DNA at stalled replication forks, which arise in vivo from mismatched or misaligned primer ends. These misaligned primers can be extended by PolIV. Exhibits no 3'-5' exonuclease (proofreading) activity. May be involved in translesional synthesis, in conjunction with the beta clamp from PolIII. The sequence is that of DNA polymerase IV from Desulfatibacillum aliphaticivorans.